The sequence spans 846 residues: Translation initiation factor IF-2 (846 aa).

The interval 198–219 (YKREEEEKKSKAKKAGGKGFKK) is disordered. The span at 207-219 (SKAKKAGGKGFKK) shows a compositional bias: basic residues. Positions 345–512 (SRAPVVTIMG…AVLLQSEVLE (168 aa)) constitute a tr-type G domain. The interval 354-361 (GHVDHGKT) is G1. GTP is bound at residue 354 to 361 (GHVDHGKT). A G2 region spans residues 379-383 (GITQH). The tract at residues 400 to 403 (DTPG) is G3. Residues 400–404 (DTPGH) and 454–457 (NKID) each bind GTP. Residues 454–457 (NKID) form a G4 region. A G5 region spans residues 490–492 (SAK).

Belongs to the TRAFAC class translation factor GTPase superfamily. Classic translation factor GTPase family. IF-2 subfamily.

It localises to the cytoplasm. Functionally, one of the essential components for the initiation of protein synthesis. Protects formylmethionyl-tRNA from spontaneous hydrolysis and promotes its binding to the 30S ribosomal subunits. Also involved in the hydrolysis of GTP during the formation of the 70S ribosomal complex. In Francisella tularensis subsp. tularensis (strain SCHU S4 / Schu 4), this protein is Translation initiation factor IF-2.